A 335-amino-acid chain; its full sequence is Glucokinase (335 aa).

A11–T16 is an ATP binding site.

The protein belongs to the bacterial glucokinase family.

It is found in the cytoplasm. It carries out the reaction D-glucose + ATP = D-glucose 6-phosphate + ADP + H(+). This chain is Glucokinase, found in Xanthomonas campestris pv. campestris (strain 8004).